We begin with the raw amino-acid sequence, 409 residues long: MKGIIFVIDGMGDRPVKELGDKTPLENARTPAMDKMVEEGITGIMDTIRPGVRPGSDTAHLTLLGYDPYEVYTGRGPFEAAGINVEVKPGDIAFRCNFSTADENLIITDRRAGRIQSGTDKLAEVINNEVKLDDVEVIFKESDGHRGVLVLRGNGLSDKITDADPKHEGNKPKTVKPLDDSEEAKFTADIVNKFVEQSYELLKDHPVNIERIENGENPANIILPRGVGAVPHVTPFEELYGLKGVCVAETGLIKGIAKIAGMDTIDIPGATGGIDTDIDSVHKYIVDTIKSNKYDFILVNVDGADEAGHDGDIFGKRDFIEKVDNIMADLKDMDDIVLFVTADHSTPVSVKDHSGDPVPVFIKAPGLRVDDVKEYGERAAAKGGLCRIRGTDVLYIIRDLMNVTQKFGA.

The segment at 160–179 is disordered; sequence ITDADPKHEGNKPKTVKPLD.

Belongs to the BPG-independent phosphoglycerate mutase family. A-PGAM subfamily.

It catalyses the reaction (2R)-2-phosphoglycerate = (2R)-3-phosphoglycerate. Its pathway is carbohydrate degradation; glycolysis; pyruvate from D-glyceraldehyde 3-phosphate: step 3/5. Functionally, catalyzes the interconversion of 2-phosphoglycerate and 3-phosphoglycerate. The chain is 2,3-bisphosphoglycerate-independent phosphoglycerate mutase from Methanosphaera stadtmanae (strain ATCC 43021 / DSM 3091 / JCM 11832 / MCB-3).